We begin with the raw amino-acid sequence, 285 residues long: 2-dehydro-3-deoxyphosphooctonate aldolase (285 aa).

This sequence belongs to the KdsA family.

The protein resides in the cytoplasm. It carries out the reaction D-arabinose 5-phosphate + phosphoenolpyruvate + H2O = 3-deoxy-alpha-D-manno-2-octulosonate-8-phosphate + phosphate. It participates in carbohydrate biosynthesis; 3-deoxy-D-manno-octulosonate biosynthesis; 3-deoxy-D-manno-octulosonate from D-ribulose 5-phosphate: step 2/3. Its pathway is bacterial outer membrane biogenesis; lipopolysaccharide biosynthesis. In Acinetobacter baumannii (strain AB307-0294), this protein is 2-dehydro-3-deoxyphosphooctonate aldolase.